Reading from the N-terminus, the 119-residue chain is uncharacterized protein (119 aa).

The next 2 helical transmembrane spans lie at I52–I72 and V88–I108.

Its subcellular location is the membrane. This is an uncharacterized protein from Dictyostelium discoideum (Social amoeba).